Consider the following 356-residue polypeptide: Arginine kinase (356 aa).

A2 is subject to N-acetylalanine. The 83-residue stretch at K9–K91 folds into the Phosphagen kinase N-terminal domain. G64–Y68 serves as a coordination point for L-arginine. The Phosphagen kinase C-terminal domain maps to F119–M356. ATP is bound by residues S122 to R126 and H185. An L-arginine-binding site is contributed by E225. ATP is bound at residue R229. Position 271 (C271) interacts with L-arginine. ATP-binding positions include R280–H284 and R309–E314. Residue E314 participates in L-arginine binding.

Belongs to the ATP:guanido phosphotransferase family.

It catalyses the reaction L-arginine + ATP = N(omega)-phospho-L-arginine + ADP + H(+). This Homarus gammarus (European lobster) protein is Arginine kinase.